The sequence spans 137 residues: Probable S-adenosyl-L-methionine-binding protein MTH_1797 (137 aa).

Residues 8–137 form the TsaA-like domain; it reads IRPVGVVRSP…YYEDIDSLGF (130 aa). Residues 25–27, 63–64, arginine 87, leucine 97, and 117–120 contribute to the S-adenosyl-L-methionine site; these read PAQ, HL, and LDGS.

Belongs to the tRNA methyltransferase O family.

In Methanothermobacter thermautotrophicus (strain ATCC 29096 / DSM 1053 / JCM 10044 / NBRC 100330 / Delta H) (Methanobacterium thermoautotrophicum), this protein is Probable S-adenosyl-L-methionine-binding protein MTH_1797.